Reading from the N-terminus, the 258-residue chain is Histidine/lysine/arginine/ornithine transport ATP-binding protein HisP (258 aa).

An ABC transporter domain is found at 7–253 (LHVIDLHKRY…PQSPRLQQFL (247 aa)). ATP is bound by residues Ser41, Gly42, Gly44, Lys45, Ser46, and Thr47.

Belongs to the ABC transporter superfamily. In terms of assembly, the HisPMQJ complex is composed of two ATP-binding proteins (HisP), two transmembrane proteins (HisM and HisQ) and a solute-binding protein (HisJ). The HisPMQ-ArgT complex is composed of two ATP-binding proteins (HisP), two transmembrane proteins (HisM and HisQ) and a solute-binding protein (ArgT).

The protein resides in the cell inner membrane. The catalysed reaction is a polar amino acid(out) + ATP + H2O = a polar amino acid(in) + ADP + phosphate + H(+). It carries out the reaction L-histidine(out) + ATP + H2O = L-histidine(in) + ADP + phosphate + H(+). It catalyses the reaction L-lysine(out) + ATP + H2O = L-lysine(in) + ADP + phosphate + H(+). The enzyme catalyses L-arginine(out) + ATP + H2O = L-arginine(in) + ADP + phosphate + H(+). The catalysed reaction is L-ornithine(out) + ATP + H2O = L-ornithine(in) + ADP + phosphate + H(+). With respect to regulation, isolated, soluble HisP has a very low ATPase activity. ATPase activity is slightly increased in the presence of HisM and HisQ, and strongly increased when HisJ is also present. Part of the ABC transporter complex HisPMQJ involved in histidine transport. Is also part of the ABC transporter complex HisPMQ-ArgT involved in lysine/arginine/ornithine transport. Shows ATPase activity. Responsible for energy coupling to the transport system. The sequence is that of Histidine/lysine/arginine/ornithine transport ATP-binding protein HisP from Salmonella typhimurium (strain LT2 / SGSC1412 / ATCC 700720).